The following is a 499-amino-acid chain: Sensor histidine kinase VxrA (499 aa).

Over 1–12 (MRYSFCMLEKTN) the chain is Cytoplasmic. Residues 13–31 (IPLIRALNLTLVSLCFAML) traverse the membrane as a helical segment. The Periplasmic segment spans residues 32-257 (PNPVHADSLP…ICWDVEDHSD (226 aa)). Cystine bridges form between Cys-101–Cys-122 and Cys-241–Cys-249. The chain crosses the membrane as a helical span at residues 258–280 (LLRTSMIILVIANIFLVLGWSGY). Residues 281 to 499 (RWNSKRQEMR…IPCETDTASR (219 aa)) lie on the Cytoplasmic side of the membrane. The 197-residue stretch at 298 to 494 (ILTHELRTPI…TFILEIPCET (197 aa)) folds into the Histidine kinase domain. At His-301 the chain carries Phosphohistidine; by autocatalysis.

Homodimer. Post-translationally, autophosphorylated. Contains two disulfide bonds that may play a role in the stability of the protein. However, the disulfide bonds are not absolutely essential, as some activity and growth are detected in the absence of each disulfide bond.

The protein resides in the cell inner membrane. It catalyses the reaction ATP + protein L-histidine = ADP + protein N-phospho-L-histidine.. Member of the two-component regulatory system VxrB/VxrA involved in the regulation of diverses processes, including virulence, the type VI secretion system (T6SS) and biofilm formation. Functions as a sensor protein kinase which is autophosphorylated at a histidine residue and transfers its phosphate group to the conserved aspartic acid residue in the regulatory domain of VxrB. Is critical for colonization in the infant mouse model. Contributes to the resistance to beta-lactam treatment. The chain is Sensor histidine kinase VxrA from Vibrio cholerae serotype O1 (strain ATCC 39315 / El Tor Inaba N16961).